The primary structure comprises 544 residues: Inosine-5'-monophosphate dehydrogenase (544 aa).

CBS domains lie at 132–192 (FITD…PIKS) and 194–250 (MTTE…PYAS). Residues 288–290 (DSS) and 338–340 (GMG) contribute to the NAD(+) site. The K(+) site is built by Gly-340 and Gly-342. Ser-343 contributes to the IMP binding site. Cys-345 is a K(+) binding site. Catalysis depends on Cys-345, which acts as the Thioimidate intermediate. Residues 378-380 (DGG), 401-402 (GG), and 425-429 (YRGMG) each bind IMP. The Proton acceptor role is filled by Arg-458. Residue Gln-470 participates in IMP binding. Glu-529, Gly-530, and Gly-531 together coordinate K(+).

Belongs to the IMPDH/GMPR family. Homotetramer. The cofactor is K(+).

It is found in the cytoplasm. It catalyses the reaction IMP + NAD(+) + H2O = XMP + NADH + H(+). Its pathway is purine metabolism; XMP biosynthesis via de novo pathway; XMP from IMP: step 1/1. With respect to regulation, mycophenolic acid (MPA) is a non-competitive inhibitor that prevents formation of the closed enzyme conformation by binding to the same site as the amobile flap. In contrast, mizoribine monophosphate (MZP) is a competitive inhibitor that induces the closed conformation. MPA is a potent inhibitor of mammalian IMPDHs but a poor inhibitor of the bacterial enzymes. MZP is a more potent inhibitor of bacterial IMPDH. In terms of biological role, catalyzes the conversion of inosine 5'-phosphate (IMP) to xanthosine 5'-phosphate (XMP), the first committed and rate-limiting step in the de novo synthesis of guanine nucleotides, and therefore plays an important role in the regulation of cell growth. In Cryptococcus neoformans var. neoformans serotype D (strain JEC21 / ATCC MYA-565) (Filobasidiella neoformans), this protein is Inosine-5'-monophosphate dehydrogenase.